The primary structure comprises 335 residues: Cholinephosphotransferase 1 (335 aa).

2 helical membrane-spanning segments follow: residues 53 to 73 (PNAITLGGLLLNCLTALPLIA) and 84 to 108 (FWAYILGALGLFIYQSLDAIDGKQA). Residue Asn54 coordinates CDP-choline. Residues Asp101 and Asp104 each contribute to the Mg(2+) site. Position 109 (Arg109) interacts with CDP-choline. 6 helical membrane-spanning segments follow: residues 116-140 (PLGELFDHGCDSISTVFVVLGSCIA), 151-169 (FFCCFVGLFMFYSAHWQTY), 181-197 (VTEVQIAITMLLLVSAF), 213-238 (ELKFFAVVGILCGTAVSCFNYFRIIF), 267-276 (IGPGLLFLDQ), and 284-313 (EYVVLWIALFISLFDMLRYATGVCLQIAAH). Asp122 contributes to the Mg(2+) binding site. His123 serves as the catalytic Proton acceptor. Position 126 (Asp126) interacts with Mg(2+).

The protein belongs to the CDP-alcohol phosphatidyltransferase class-I family. Requires Mg(2+) as cofactor. Mn(2+) is required as a cofactor.

The protein resides in the golgi apparatus membrane. The catalysed reaction is CDP-choline + a 1,2-diacyl-sn-glycerol = a 1,2-diacyl-sn-glycero-3-phosphocholine + CMP + H(+). The enzyme catalyses 1-octadecanoyl-2-(5Z,8Z,11Z,14Z-eicosatetraenoyl)-sn-glycerol + CDP-choline = 1-octadecanoyl-2-(5Z,8Z,11Z,14Z-eicosatetraenoyl)-sn-glycero-3-phosphocholine + CMP + H(+). It catalyses the reaction 1-hexadecanoyl-2-(9Z-octadecenoyl)-sn-glycerol + CDP-choline = 1-hexadecanoyl-2-(9Z-octadecenoyl)-sn-glycero-3-phosphocholine + CMP + H(+). It carries out the reaction 1-hexadecanoyl-2-(4Z,7Z,10Z,13Z,16Z,19Z-docosahexaenoyl)-sn-glycerol + CDP-choline = 1-hexadecanoyl-2-(4Z,7Z,10Z,13Z,16Z,19Z-docosahexaenoyl)-sn-glycero-3-phosphocholine + CMP + H(+). The catalysed reaction is 1,2-dioctanoyl-sn-glycerol + CDP-choline = 1,2-dioctanoyl-sn-glycero-3-phosphocholine + CMP + H(+). It functions in the pathway phospholipid metabolism; phosphatidylcholine biosynthesis; phosphatidylcholine from phosphocholine: step 2/2. In terms of biological role, catalyzes the final step of de novo phosphatidylcholine (PC) synthesis, i.e. the transfer of choline phosphate from CDP-choline to the free hydroxyl of a diacylglycerol (DAG), producing a PC. It thereby plays a central role in the formation and maintenance of vesicular membranes. The polypeptide is Cholinephosphotransferase 1 (CHPT1) (Gallus gallus (Chicken)).